The following is a 453-amino-acid chain: tRNA modification GTPase MnmE (453 aa).

(6S)-5-formyl-5,6,7,8-tetrahydrofolate-binding residues include R22, E79, and K119. One can recognise a TrmE-type G domain in the interval 215 to 376 (GMKVVIAGRP…LKQHLKSLMG (162 aa)). Residue N225 coordinates K(+). GTP-binding positions include 225–230 (NAGKSS), 244–250 (TDIAGTT), 269–272 (DTAG), and 334–337 (NKAD). Residue S229 coordinates Mg(2+). K(+) contacts are provided by T244, I246, and T249. T250 provides a ligand contact to Mg(2+). Position 453 (K453) interacts with (6S)-5-formyl-5,6,7,8-tetrahydrofolate.

It belongs to the TRAFAC class TrmE-Era-EngA-EngB-Septin-like GTPase superfamily. TrmE GTPase family. In terms of assembly, homodimer. Heterotetramer of two MnmE and two MnmG subunits. It depends on K(+) as a cofactor.

Its subcellular location is the cytoplasm. Its function is as follows. Exhibits a very high intrinsic GTPase hydrolysis rate. Involved in the addition of a carboxymethylaminomethyl (cmnm) group at the wobble position (U34) of certain tRNAs, forming tRNA-cmnm(5)s(2)U34. The chain is tRNA modification GTPase MnmE from Shewanella amazonensis (strain ATCC BAA-1098 / SB2B).